The sequence spans 1486 residues: Chromosome partition protein MukB (1486 aa).

34 to 41 (GGNGAGKS) lines the ATP pocket. Coiled-coil stretches lie at residues 326–418 (LEAD…QYNQ), 444–480 (LETF…QAYQ), and 509–603 (RHLA…RAPV). Positions 666–783 (PGGSEDQRLN…EVPLFGRAAR (118 aa)) are flexible hinge. Coiled-coil stretches lie at residues 835–923 (EAEI…AKLE), 977–1115 (EMLS…TAKA), and 1209–1266 (VEAI…QNVS).

The protein belongs to the SMC family. MukB subfamily. In terms of assembly, homodimerization via its hinge domain. Binds to DNA via its C-terminal region. Interacts, and probably forms a ternary complex, with MukE and MukF via its C-terminal region. The complex formation is stimulated by calcium or magnesium. Interacts with tubulin-related protein FtsZ.

Its subcellular location is the cytoplasm. The protein localises to the nucleoid. Plays a central role in chromosome condensation, segregation and cell cycle progression. Functions as a homodimer, which is essential for chromosome partition. Involved in negative DNA supercoiling in vivo, and by this means organize and compact chromosomes. May achieve or facilitate chromosome segregation by condensation DNA from both sides of a centrally located replisome during cell division. This chain is Chromosome partition protein MukB, found in Escherichia coli O81 (strain ED1a).